We begin with the raw amino-acid sequence, 273 residues long: Medium-wave-sensitive opsin 1 (273 aa).

Topologically, residues 1 to 5 (APRWV) are extracellular. The chain crosses the membrane as a helical span at residues 6-30 (YHLTSAWMVFVVIASVFTNGLVLAA). Over 31-42 (TMRFKKLRHPLN) the chain is Cytoplasmic. The chain crosses the membrane as a helical span at residues 43-68 (WILVNLAIADLVETIIASTISVVNQM). Residues 69–82 (YGYFVLGHPLCVVE) are Extracellular-facing. Cysteines 79 and 156 form a disulfide. The helical transmembrane segment at 83–102 (GYTASLCGITGLWSLAIISW) threads the bilayer. The Cytoplasmic portion of the chain corresponds to 103 to 121 (ERWMVVCRPFGNVRFDAKL). The chain crosses the membrane as a helical span at residues 122 to 145 (AIAGIAFSWIWAAVWTAPPIFGWS). Topologically, residues 146-171 (RYWPHGLKTSCGPDVFSGSSYPGVQS) are extracellular. The chain crosses the membrane as a helical span at residues 172–199 (YMIVLMITCCFIPLSVIVLCYLQVWLAI). The Cytoplasmic portion of the chain corresponds to 200-221 (RAVAKQQKESESTQKAEKEVTR). Residues 222-245 (MVMVMIFAFCLCWGPYAFFACFAA) traverse the membrane as a helical segment. The Extracellular segment spans residues 246-253 (AHPGYAFH). The chain crosses the membrane as a helical span at residues 254–273 (PLVAALPAYFAKSATIYNPI). Residue Lys-265 is modified to N6-(retinylidene)lysine.

The protein belongs to the G-protein coupled receptor 1 family. Opsin subfamily. In terms of assembly, monomer. Homodimer. Homotetramer. In terms of processing, O-glycosylated. Post-translationally, phosphorylated on some or all of the serine and threonine residues present in the C-terminal region. In terms of tissue distribution, the three color pigments are found in the cone photoreceptor cells.

The protein localises to the membrane. Visual pigments are the light-absorbing molecules that mediate vision. They consist of an apoprotein, opsin, covalently linked to cis-retinal. This chain is Medium-wave-sensitive opsin 1 (OPN1MW), found in Odocoileus virginianus virginianus (Virginia white-tailed deer).